A 558-amino-acid chain; its full sequence is MAELNTHVNVKEKIYAVRSVVPNKSNNEIVLVLQQFDFNVDKAVQAFVDGSAIQVLKEWSMTGKKKNNKRKRSKSKQHQGNKDAKDKGERPEVGPLQPQAPLVQNGHMNGCEKDSSSPDSAREKLALTPREKKISILEEPPRAQRGITEGSRLLQQKMSLDGNPKAIHGPSERSDGLQWSAGQPCNPSKPKAKTSPVKSNAPAAHLEIKPDELAKKRGPNIEKSVKDLQRCTVSLTRYRVMIKEEVDSSVKKIKAAFAELHNCIIDKEVSLMAEMDKVKEEAMDILTARQKKAEELKRLTDLASQMAEMQLAELRAEIKHFVSERKYDEELGKAARFSCDIEQLKAQILICGEITHPKNNYSSRTPCSSLLPLLNTHAVASGKQGNFSRKSSGHNKPNEGKAANPKMVSGLPSTADACQQTMPTNKQQNGPSNQRRRFNPQYHNRLNGPAKSQGSGNEADPMVKSNNRHEHRRQPHNGFRPKNKGGAKNQEAPLGTKAPEAPPHSEKARRRQHAADNLETRPFRGNVGRVSQCNLCPTRIEVSTEATVLSVPAVTLVA.

Ala2 carries the N-acetylalanine modification. Positions 63–79 (GKKKNNKRKRSKSKQHQ) are enriched in basic residues. Disordered stretches follow at residues 63-148 (GKKK…RGIT) and 161-202 (DGNP…SNAP). Composition is skewed to basic and acidic residues over residues 80–92 (GNKD…ERPE) and 110–142 (GCEK…EPPR). Phosphoserine is present on Ser120. A coiled-coil region spans residues 279–344 (KEEAMDILTA…ARFSCDIEQL (66 aa)). The disordered stretch occupies residues 383 to 514 (KQGNFSRKSS…SEKARRRQHA (132 aa)). A compositionally biased stretch (polar residues) spans 416 to 433 (DACQQTMPTNKQQNGPSN). Ser455 is modified (phosphoserine). The span at 469–485 (HEHRRQPHNGFRPKNKG) shows a compositional bias: basic residues.

The protein belongs to the SPATS2 family.

The protein localises to the cytoplasm. The protein resides in the nucleus. Its subcellular location is the nucleolus. The polypeptide is SPATS2-like protein (Spats2l) (Rattus norvegicus (Rat)).